A 273-amino-acid polypeptide reads, in one-letter code: Exosporium protein C (273 aa).

Its subcellular location is the spore wall. The protein is Exosporium protein C of Clostridium sporogenes (strain ATCC 15579).